A 270-amino-acid polypeptide reads, in one-letter code: Gap junction beta-3 protein (270 aa).

Residues 1-20 are Cytoplasmic-facing; that stretch reads MDWKKLQDLLSGVNQYSTAF. A helical transmembrane segment spans residues 21-40; that stretch reads GRIWLSVVFVFRVLVYVVAA. The Extracellular segment spans residues 41–75; sequence ERVWGDEQKDFDCNTRQPGCTNVCYDNFFPISNIR. A helical transmembrane segment spans residues 76–98; sequence LWALQLIFVTCPSMLVILHVAYR. Residues 99 to 126 are Cytoplasmic-facing; it reads EERERKHRQKHGEHCAKLYSHPGKKHGG. The chain crosses the membrane as a helical span at residues 127 to 149; the sequence is LWWTYLFSLIFKLIIELVFLYVL. The Extracellular portion of the chain corresponds to 150 to 188; it reads HTLWHGFTMPRLVQCASVVPCPNTVDCYIARPTEKKVFT. A helical transmembrane segment spans residues 189–211; it reads YFMVGASAVCIILTICEICYLIF. At 212 to 270 the chain is on the cytoplasmic side; sequence HRIMRGLSKDKSTKSISSPKSSSRASTCRCHHKLLESGDLEAVPADDKLQASAPSLTPI.

This sequence belongs to the connexin family. Beta-type (group I) subfamily. In terms of assembly, a connexon is composed of a hexamer of connexins. Interacts with CNST.

It is found in the cell membrane. Its subcellular location is the cell junction. It localises to the gap junction. Its function is as follows. One gap junction consists of a cluster of closely packed pairs of transmembrane channels, the connexons, through which materials of low MW diffuse from one cell to a neighboring cell. This Rattus norvegicus (Rat) protein is Gap junction beta-3 protein (Gjb3).